We begin with the raw amino-acid sequence, 202 residues long: NADH-quinone oxidoreductase subunit B 2 (202 aa).

Positions 38, 39, 104, and 133 each coordinate [4Fe-4S] cluster.

The protein belongs to the complex I 20 kDa subunit family. As to quaternary structure, NDH-1 is composed of 14 different subunits. Subunits NuoB, C, D, E, F, and G constitute the peripheral sector of the complex. It depends on [4Fe-4S] cluster as a cofactor.

It is found in the cell inner membrane. It catalyses the reaction a quinone + NADH + 5 H(+)(in) = a quinol + NAD(+) + 4 H(+)(out). In terms of biological role, NDH-1 shuttles electrons from NADH, via FMN and iron-sulfur (Fe-S) centers, to quinones in the respiratory chain. The immediate electron acceptor for the enzyme in this species is believed to be ubiquinone. Couples the redox reaction to proton translocation (for every two electrons transferred, four hydrogen ions are translocated across the cytoplasmic membrane), and thus conserves the redox energy in a proton gradient. The protein is NADH-quinone oxidoreductase subunit B 2 of Koribacter versatilis (strain Ellin345).